We begin with the raw amino-acid sequence, 525 residues long: GMP synthase [glutamine-hydrolyzing] (525 aa).

Residues 9–207 (RILILDFGSQ…VLDICRCTPL (199 aa)) enclose the Glutamine amidotransferase type-1 domain. The Nucleophile role is filled by Cys-86. Active-site residues include His-181 and Glu-183. Residues 208–400 (WTPAKIIEDA…LGLPYDMLYR (193 aa)) enclose the GMPS ATP-PPase domain. 235 to 241 (SGGVDSS) lines the ATP pocket.

Homodimer.

The catalysed reaction is XMP + L-glutamine + ATP + H2O = GMP + L-glutamate + AMP + diphosphate + 2 H(+). Its pathway is purine metabolism; GMP biosynthesis; GMP from XMP (L-Gln route): step 1/1. Catalyzes the synthesis of GMP from XMP. The protein is GMP synthase [glutamine-hydrolyzing] of Sodalis glossinidius (strain morsitans).